A 231-amino-acid chain; its full sequence is MEKDNQPSIEELKAFLQKNNIEYKNIDLFIEATTHKTYSKVNKNSKDYERLEFLGDSLVGFLISDYCVREFSSLEPGELSRLRSKLVDKLALFKIAQKLKVEQIIKTGPKKARNEVLSSSNVLSDVVEALIAAIYLDQGMQSAKDFIKSHFYEIANKAQNKPNKDPKSELQEYFQTISAETVKYETIEIPNKRSFESKAWHLNKIYGTGVGLSKKDAEKNAAANALSKLKT.

Residues 12–139 form the RNase III domain; that stretch reads LKAFLQKNNI…LIAAIYLDQG (128 aa). Glutamate 52 contributes to the Mg(2+) binding site. Residue aspartate 56 is part of the active site. Positions 125 and 128 each coordinate Mg(2+). Residue glutamate 128 is part of the active site. The DRBM domain occupies 165–231; the sequence is DPKSELQEYF…AANALSKLKT (67 aa).

This sequence belongs to the ribonuclease III family. As to quaternary structure, homodimer. The cofactor is Mg(2+).

The protein resides in the cytoplasm. The enzyme catalyses Endonucleolytic cleavage to 5'-phosphomonoester.. Digests double-stranded RNA. Involved in the processing of primary rRNA transcript to yield the immediate precursors to the large and small rRNAs (23S and 16S). Processes some mRNAs, and tRNAs when they are encoded in the rRNA operon. Processes pre-crRNA and tracrRNA of type II CRISPR loci if present in the organism. The chain is Ribonuclease 3 from Mycoplasmopsis synoviae (strain 53) (Mycoplasma synoviae).